A 40-amino-acid chain; its full sequence is Photosystem II reaction center protein J (40 aa).

A helical transmembrane segment spans residues 8-28 (IPLWLVGTVTGIPVIGLIGVF).

It belongs to the PsbJ family. PSII is composed of 1 copy each of membrane proteins PsbA, PsbB, PsbC, PsbD, PsbE, PsbF, PsbH, PsbI, PsbJ, PsbK, PsbL, PsbM, PsbT, PsbX, PsbY, PsbZ, Psb30/Ycf12, at least 3 peripheral proteins of the oxygen-evolving complex and a large number of cofactors. It forms dimeric complexes.

It is found in the plastid. The protein resides in the chloroplast thylakoid membrane. In terms of biological role, one of the components of the core complex of photosystem II (PSII). PSII is a light-driven water:plastoquinone oxidoreductase that uses light energy to abstract electrons from H(2)O, generating O(2) and a proton gradient subsequently used for ATP formation. It consists of a core antenna complex that captures photons, and an electron transfer chain that converts photonic excitation into a charge separation. The sequence is that of Photosystem II reaction center protein J from Musa acuminata (Banana).